A 2153-amino-acid polypeptide reads, in one-letter code: Non-reducing polyketide synthase albA (2153 aa).

The segment at 8–244 (YLFGDQTSDI…VKAPIHGPYH (237 aa)) is N-terminal acylcarrier protein transacylase domain (SAT). The Ketosynthase family 3 (KS3) domain maps to 375 to 806 (NSKIAIIGMS…GGNTALLLED (432 aa)). Residues Cys-547, His-682, and His-724 each act as for beta-ketoacyl synthase activity in the active site. Residues 912 to 1232 (FVFTGQGAQY…LASLHLAGID (321 aa)) are malonyl-CoA:ACP transacylase (MAT) domain. Ser-1001 functions as the For acyl/malonyl transferase activity in the catalytic mechanism. Residues 1286–1425 (HEYLTTAAQK…CTVRFFDCAA (140 aa)) are N-terminal hotdog fold. Residues 1286–1598 (HEYLTTAAQK…FQALSRKILD (313 aa)) form the PKS/mFAS DH domain. A product template (PT) domain region spans residues 1290–1603 (TTAAQKVIET…RKILDTVLPP (314 aa)). His-1326 functions as the Proton acceptor; for dehydratase activity in the catalytic mechanism. The interval 1452–1598 (DAHRLGRGMV…FQALSRKILD (147 aa)) is C-terminal hotdog fold. The Proton donor; for dehydratase activity role is filled by Asp-1511. The disordered stretch occupies residues 1608 to 1643 (KGPARPAASAQKAAPAAAASKSRASAPAPAKPAAKP). Positions 1610–1643 (PARPAASAQKAAPAAAASKSRASAPAPAKPAAKP) are enriched in low complexity. Residues 1643–1720 (PSAPSLVKRA…DFKQFLAPMS (78 aa)) form the Carrier 1 domain. At Ser-1680 the chain carries O-(pantetheine 4'-phosphoryl)serine. The segment at 1720 to 1765 (SQGEASDGSTSDPESSSSFNGGSSTDESSAGSPVSSPPNEKVTQVE) is disordered. The span at 1725-1748 (SDGSTSDPESSSSFNGGSSTDESS) shows a compositional bias: low complexity. A compositionally biased stretch (polar residues) spans 1749 to 1765 (AGSPVSSPPNEKVTQVE). The 78-residue stretch at 1764 to 1841 (VEQHATIKEI…DVEDALGLKP (78 aa)) folds into the Carrier 2 domain. Ser-1801 is subject to O-(pantetheine 4'-phosphoryl)serine. The interval 1879 to 2151 (SPHPRSTSIL…ELGSFIGNAM (273 aa)) is claisen cyclase domain. The active-site For Claisen cyclase activity is the Ser-1969.

It catalyses the reaction 6 malonyl-CoA + acetyl-CoA + 6 H(+) = naphtopyrone YWA1 + 6 CO2 + 7 CoA + H2O. Its pathway is secondary metabolite biosynthesis. Non-reducing polyketide synthase; part of the gene cluster that mediates the biosynthesis of aurasperone B, a dimeric gamma-naphthopyrone. The first step in the biosynthesis of aurasperone B is the production of gamma-naphthopyrone precursor YWA1 by the non-reducing polyketide synthase albA, via condensation of one acetyl-CoA starter unit with 6 malonyl-CoA units. YWA1 is then methylated by aunE at position C-6 to yield foncesin which is further methylated at position C-8 by aunD to produce fonsecin B. A key enzyme in the biosynthetic pathway is the cytochrome P450 monooxygenase aunB which catalyzes the oxidative dimerization of fonsecin B to aurasperone B. AunB also catalyzes the oxidative dimerization of rubrofusarin B into aurasperone A. The protein is Non-reducing polyketide synthase albA of Aspergillus niger (strain ATCC MYA-4892 / CBS 513.88 / FGSC A1513).